A 261-amino-acid chain; its full sequence is uncharacterized protein (261 aa).

The N-terminal stretch at 1 to 22 (MGYSKRFALYISVMILIFAIAG) is a signal peptide. C23 is lipidated: N-palmitoyl cysteine. C23 carries S-diacylglycerol cysteine lipidation.

It belongs to the staphylococcal tandem lipoprotein family.

It localises to the cell membrane. This is an uncharacterized protein from Staphylococcus aureus (strain N315).